Consider the following 294-residue polypeptide: Glyceraldehyde-3-phosphate dehydrogenase (294 aa).

NAD(+) is bound by residues D19, K63, and T105. D-glyceraldehyde 3-phosphate contacts are provided by residues S134–T136, T165, T194–G195, and R217. C135 acts as the Nucleophile in catalysis.

Belongs to the glyceraldehyde-3-phosphate dehydrogenase family. Homotetramer.

Its subcellular location is the cytoplasm. The enzyme catalyses D-glyceraldehyde 3-phosphate + phosphate + NAD(+) = (2R)-3-phospho-glyceroyl phosphate + NADH + H(+). It participates in carbohydrate degradation; glycolysis; pyruvate from D-glyceraldehyde 3-phosphate: step 1/5. Catalyzes the oxidative phosphorylation of glyceraldehyde 3-phosphate (G3P) to 1,3-bisphosphoglycerate (BPG) using the cofactor NAD. The first reaction step involves the formation of a hemiacetal intermediate between G3P and a cysteine residue, and this hemiacetal intermediate is then oxidized to a thioester, with concomitant reduction of NAD to NADH. The reduced NADH is then exchanged with the second NAD, and the thioester is attacked by a nucleophilic inorganic phosphate to produce BPG. The sequence is that of Glyceraldehyde-3-phosphate dehydrogenase (gap) from Atlantibacter hermannii (Escherichia hermannii).